The following is a 253-amino-acid chain: Glutamate racemase (253 aa).

Substrate contacts are provided by residues 7 to 8 (DS) and 39 to 40 (YG). Cys70 acts as the Proton donor/acceptor in catalysis. Residue 71–72 (NS) participates in substrate binding. Cys179 acts as the Proton donor/acceptor in catalysis. Substrate is bound at residue 180–181 (TH).

This sequence belongs to the aspartate/glutamate racemases family.

The enzyme catalyses L-glutamate = D-glutamate. It participates in cell wall biogenesis; peptidoglycan biosynthesis. Its function is as follows. Provides the (R)-glutamate required for cell wall biosynthesis. In Nitratiruptor sp. (strain SB155-2), this protein is Glutamate racemase.